Consider the following 972-residue polypeptide: Nuclear factor NF-kappa-B p105 subunit (972 aa).

An RHD domain is found at 39–246 (ADGPYLQILE…DAIYDSKAPN (208 aa)). Residue Cys-61 is modified to S-nitrosocysteine; alternate. Residue Cys-61 is the site of S-(15-deoxy-Delta12,14-prostaglandin J2-9-yl)cysteine; alternate attachment. Lys-325 is covalently cross-linked (Glycyl lysine isopeptide (Lys-Gly) (interchain with G-Cter in SUMO2)). A Phosphoserine; by PKA modification is found at Ser-337. The Nuclear localization signal signature appears at 360–365 (QRKRQK). The interval 372–394 (DSFGGGSGAGAGGGGMFGSGGGG) is GRR. The tract at residues 425 to 473 (KSNAGMKHGTIDTPSKNDSEGCGKNVDREAVNLSGKVTEPTEQDKESSM) is disordered. N6-acetyllysine; by EP300 occurs at positions 431 and 440. An interaction with CFLAR region spans residues 435 to 972 (IDTPSKNDSE…GQEGPIEGKI (538 aa)). A compositionally biased stretch (basic and acidic residues) spans 439 to 454 (SKNDSEGCGKNVDREA). ANK repeat units follow at residues 539-568 (NGDSVLHLAIIHLHAQLVRDLLEVTSGLIS), 578-607 (LYQTPLHLAVITKQEAVVDDLLRAGADLSL), 611-640 (LGNSVLHLAAKEGQDKILSILLKHKKAALL), 647-676 (EGLNAIHIAVMSNSMPCLLLLVAAGADVNA), 681-711 (SGRTALHLAVEHDNISLAGCLLLEGDAHVDS), and 715-744 (DGTTPLHIAAGRGSTRLAALLKAAGADPLV). Residues 647-681 (EGLNAIHIAVMSNSMPCLLLLVAAGADVNAQERKS) are essential for interaction with HIF1AN. Asn-675 carries the (3S)-3-hydroxyasparagine; by HIF1AN modification. Ser-756 bears the Phosphoserine mark. Residues 768 to 798 (PGTTPLDMATNWQVFDILNGKPYEPEFTSDD) form an ANK 7 repeat. Positions 814–889 (LQLYKLLEIP…EAIEVIQAAF (76 aa)) constitute a Death domain. Residues 894–926 (TAAPSPGKGAPQTLSLPLSSASTRSPVDEVRDD) are disordered. Over residues 905–918 (QTLSLPLSSASTRS) the composition is skewed to polar residues. Ser-908 and Ser-912 each carry phosphoserine; by GSK3-beta; in vitro. Ser-927 bears the Phosphoserine mark. Phosphoserine; by IKKB occurs at positions 931 and 936. Ser-941 is subject to Phosphoserine. Phosphothreonine is present on Thr-947.

In terms of assembly, component of the NF-kappa-B p65-p50 complex. Homodimer; component of the NF-kappa-B p50-p50 complex. Component of the NF-kappa-B p105-p50 complex. Component of the NF-kappa-B p50-c-Rel complex. Component of a complex consisting of the NF-kappa-B p50-p50 homodimer and BCL3. Also interacts with MAP3K8. NF-kappa-B p50 subunit interacts with NCOA3 coactivator, which may coactivate NF-kappa-B dependent expression via its histone acetyltransferase activity. Interacts with TSC22D3; this interaction prevents nuclear translocation and DNA-binding. Interacts with SPAG9 and UNC5CL. NFKB1/p105 interacts with CFLAR; the interaction inhibits p105 processing into p50. NFKB1/p105 forms a ternary complex with MAP3K8 and TNIP2. Interacts with GSK3B; the interaction prevents processing of p105 to p50. NFKB1/p50 interacts with NFKBIE. NFKB1/p50 interacts with NFKBIZ. Nuclear factor NF-kappa-B p50 subunit interacts with NFKBID. Directly interacts with MEN1. Interacts with HIF1AN. Interacts with FEM1A; interaction is direct. In terms of processing, generation of the NF-kappa-B p50 (Nuclear factor NF-kappa-B p50 subunit) transcription factor takes place both cotranslationally and post-translationally via non-mutually exclusive mechanisms. A cotranslational processing allows the production of both p50 and p105 (Nuclear factor NF-kappa-B p105 subunit) from a single NFKB1 mRNA. While translation occurs, the particular unfolded structure after the GRR repeat region acts as a substrate for the proteasome, promoting degradation of the C-terminus. The GRR acts as a proteasomal 'stop signal', protecting the region upstream of the GRR from degradation and promoting generation of p50. It is unclear if limited proteasome degradation during cotranslational processing depends on ubiquitination. NF-kappa-B p50 is also generated post-translationally following ubiquitination by the KPC complex, leading to limited processing by the proteasome downstream of the GRR region, thereby generating p50. Post-translationally, phosphorylation at the C-terminus by IKBKB/IKKB acts as a signal for ubiquitination and promotes either complete degradation or processing to generate the NF-kappa-B p50 (Nuclear factor NF-kappa-B p50 subunit). Phosphorylation at Ser-908 and Ser-912 primes p105 for proteolytic processing in response to TNF-alpha stimulation. Phosphorylation at Ser-927, Ser-931 and Ser-936 are required for BTRC/BTRCP-mediated ubiquitination and proteolysis. Phosphorylation at Ser-931 is also required for ubiquitination by the KPC complex and limited processing to generate NF-kappa-B p50 (Nuclear factor NF-kappa-B p50 subunit). Polyubiquitinated at multiple Lys residues in the C-terminus. Polyubiquitinated by the SCF(FBXW11) and SCF(BTRC) complexes following phosphorylation at Ser-923, Ser-927, Ser-931 and Ser-936, leading to its complete degradation. In contrast, polyubiquitination by the KPC complex following phosphorylation at Ser-931 leads to limited proteosomal processing and generation of the active NF-kappa-B p50 (Nuclear factor NF-kappa-B p50 subunit). In terms of processing, S-nitrosylation of Cys-61 affects DNA binding. Post-translationally, the covalent modification of cysteine by 15-deoxy-Delta12,14-prostaglandin-J2 is autocatalytic and reversible. It may occur as an alternative to other cysteine modifications, such as S-nitrosylation and S-palmitoylation.

The protein localises to the cytoplasm. It localises to the nucleus. In terms of biological role, NF-kappa-B is a pleiotropic transcription factor present in almost all cell types and is the endpoint of a series of signal transduction events that are initiated by a vast array of stimuli related to many biological processes such as inflammation, immunity, differentiation, cell growth, tumorigenesis and apoptosis. NF-kappa-B is a homo- or heterodimeric complex formed by the Rel-like domain-containing proteins RELA/p65, RELB, NFKB1/p105, NFKB1/p50, REL and NFKB2/p52 and the heterodimeric p65-p50 complex appears to be most abundant one. The dimers bind at kappa-B sites in the DNA of their target genes and the individual dimers have distinct preferences for different kappa-B sites that they can bind with distinguishable affinity and specificity. Different dimer combinations act as transcriptional activators or repressors, respectively. NF-kappa-B is controlled by various mechanisms of post-translational modification and subcellular compartmentalization as well as by interactions with other cofactors or corepressors. NF-kappa-B complexes are held in the cytoplasm in an inactive state complexed with members of the NF-kappa-B inhibitor (I-kappa-B) family. In a conventional activation pathway, I-kappa-B is phosphorylated by I-kappa-B kinases (IKKs) in response to different activators, subsequently degraded thus liberating the active NF-kappa-B complex which translocates to the nucleus. NF-kappa-B heterodimeric p65-p50 and RelB-p50 complexes are transcriptional activators. The NF-kappa-B p50-p50 homodimer is a transcriptional repressor, but can act as a transcriptional activator when associated with BCL3. NFKB1 appears to have dual functions such as cytoplasmic retention of attached NF-kappa-B proteins by p105 and generation of p50 by a cotranslational processing. The proteasome-mediated process ensures the production of both p50 and p105 and preserves their independent function, although processing of NFKB1/p105 also appears to occur post-translationally. p50 binds to the kappa-B consensus sequence 5'-GGRNNYYCC-3', located in the enhancer region of genes involved in immune response and acute phase reactions. In a complex with MAP3K8, NFKB1/p105 represses MAP3K8-induced MAPK signaling; active MAP3K8 is released by proteasome-dependent degradation of NFKB1/p105. Functionally, P105 is the precursor of the active p50 subunit (Nuclear factor NF-kappa-B p50 subunit) of the nuclear factor NF-kappa-B. Acts as a cytoplasmic retention of attached NF-kappa-B proteins by p105. Constitutes the active form, which associates with RELA/p65 to form the NF-kappa-B p65-p50 complex to form a transcription factor. Together with RELA/p65, binds to the kappa-B consensus sequence 5'-GGRNNYYCC-3', located in the enhancer region of genes involved in immune response and acute phase reactions. The chain is Nuclear factor NF-kappa-B p105 subunit (NFKB1) from Canis lupus familiaris (Dog).